Here is an 81-residue protein sequence, read N- to C-terminus: Three-finger toxin A1 (81 aa).

Residues 1 to 21 (MKTLLLTLVVVTIVCLDFGHT) form the signal peptide. 4 cysteine pairs are disulfide-bonded: C24–C43, C38–C60, C62–C73, and C74–C79.

Belongs to the three-finger toxin family. Short-chain subfamily. Type I alpha-neurotoxin sub-subfamily. As to expression, expressed by the venom gland.

The protein resides in the secreted. Binds and inhibits fetal (alpha-1-beta-1-gamma-delta/CHRNA1-CHRNB1-CHRNG-CHRND, IC(50)=1.4 nM), adult (alpha-1-beta-1-delta-epsilon/CHRNA1-CHRNB1-CHRND-CHRNE, IC(50)=12 nM) and neuronal alpha-7/CHRNA7 (IC(50)=400 nM) nicotinic acetylcholine receptors (nAChR) thereby impairing neuromuscular and neuronal transmissions. This chain is Three-finger toxin A1, found in Micrurus laticollaris (Balsas coral snake).